The chain runs to 374 residues: Serpin B8 (374 aa).

It belongs to the serpin family. Ov-serpin subfamily.

It is found in the cytoplasm. In terms of biological role, has an important role in epithelial desmosome-mediated cell-cell adhesion. This Bos taurus (Bovine) protein is Serpin B8 (SERPINB8).